A 297-amino-acid polypeptide reads, in one-letter code: Nucleotide-binding protein CJA_2809 (297 aa).

8-15 (GLSGSGKT) contacts ATP. 59–62 (DVRN) provides a ligand contact to GTP.

It belongs to the RapZ-like family.

Displays ATPase and GTPase activities. The sequence is that of Nucleotide-binding protein CJA_2809 from Cellvibrio japonicus (strain Ueda107) (Pseudomonas fluorescens subsp. cellulosa).